Reading from the N-terminus, the 166-residue chain is Lipoprotein signal peptidase (166 aa).

Transmembrane regions (helical) follow at residues 12-32 (LPIALFILVALVADQAIKYLV), 66-86 (MEGWFIVGMRLAVVAFVLWLW), and 101-121 (AMIIAGALGNLVDRLLFGYVI). Residues Asp-122 and Asp-140 contribute to the active site. The chain crosses the membrane as a helical span at residues 132–152 (SFAVFNLADSFITVGAGAIIL).

It belongs to the peptidase A8 family.

The protein localises to the cell inner membrane. It catalyses the reaction Release of signal peptides from bacterial membrane prolipoproteins. Hydrolyzes -Xaa-Yaa-Zaa-|-(S,diacylglyceryl)Cys-, in which Xaa is hydrophobic (preferably Leu), and Yaa (Ala or Ser) and Zaa (Gly or Ala) have small, neutral side chains.. The protein operates within protein modification; lipoprotein biosynthesis (signal peptide cleavage). In terms of biological role, this protein specifically catalyzes the removal of signal peptides from prolipoproteins. The chain is Lipoprotein signal peptidase from Sinorhizobium fredii (strain NBRC 101917 / NGR234).